Here is a 362-residue protein sequence, read N- to C-terminus: tRNA 2-selenouridine synthase (362 aa).

The Rhodanese domain maps to 14–137; the sequence is LANETPIIDV…LRQATIEMTN (124 aa). Cys-97 functions as the S-selanylcysteine intermediate in the catalytic mechanism.

The protein belongs to the SelU family. As to quaternary structure, monomer.

The catalysed reaction is 5-methylaminomethyl-2-thiouridine(34) in tRNA + selenophosphate + (2E)-geranyl diphosphate + H2O + H(+) = 5-methylaminomethyl-2-selenouridine(34) in tRNA + (2E)-thiogeraniol + phosphate + diphosphate. It carries out the reaction 5-methylaminomethyl-2-thiouridine(34) in tRNA + (2E)-geranyl diphosphate = 5-methylaminomethyl-S-(2E)-geranyl-thiouridine(34) in tRNA + diphosphate. It catalyses the reaction 5-methylaminomethyl-S-(2E)-geranyl-thiouridine(34) in tRNA + selenophosphate + H(+) = 5-methylaminomethyl-2-(Se-phospho)selenouridine(34) in tRNA + (2E)-thiogeraniol. The enzyme catalyses 5-methylaminomethyl-2-(Se-phospho)selenouridine(34) in tRNA + H2O = 5-methylaminomethyl-2-selenouridine(34) in tRNA + phosphate. Its function is as follows. Involved in the post-transcriptional modification of the uridine at the wobble position (U34) of tRNA(Lys), tRNA(Glu) and tRNA(Gln). Catalyzes the conversion of 2-thiouridine (S2U-RNA) to 2-selenouridine (Se2U-RNA). Acts in a two-step process involving geranylation of 2-thiouridine (S2U) to S-geranyl-2-thiouridine (geS2U) and subsequent selenation of the latter derivative to 2-selenouridine (Se2U) in the tRNA chain. The chain is tRNA 2-selenouridine synthase from Proteus mirabilis (strain HI4320).